A 938-amino-acid polypeptide reads, in one-letter code: Collagen alpha-1(I) chain (938 aa).

The segment at 1 to 938 (GGISVPGPMG…PGPPGPPGPP (938 aa)) is disordered. Residues Pro18, Pro21, Pro24, Pro33, Pro36, Pro39, Pro54, Pro69, Pro75, Pro84, and Pro90 each carry the 4-hydroxyproline modification. Residues 26-45 (PQGFQGPPGEPGEPGASGPM) are compositionally biased toward low complexity. A compositionally biased stretch (basic and acidic residues) spans 57–71 (NGDDGEAGKPGRPGE). The residue at position 93 (Lys93) is a 5-hydroxylysine; alternate. O-linked (Gal...) hydroxylysine; alternate glycosylation is present at Lys93. Ser99 bears the Phosphoserine mark. Residues 107 to 135 (DAGPAGPKGRPGASGPAGARGNDGATGAA) show a composition bias toward low complexity. A 4-hydroxyproline mark is found at Pro117, Pro138, Pro147, Pro150, Pro177, Pro180, Pro192, Pro198, Pro207, Pro213, Pro216, and Pro231. Residues 137 to 149 (PPGPTGPAGPPGF) show a composition bias toward pro residues. Over residues 183 to 222 (AGAAGPAGNPGADGQPGAKGANGAPGIAGAPGFPGARGPS) the composition is skewed to low complexity. 5-hydroxylysine is present on Lys234. Residues Pro240, Pro243, Pro255, Pro264, Pro279, Pro285, Pro294, and Pro300 each carry the 4-hydroxyproline modification. Positions 289-298 (GERGGPGSRG) are enriched in gly residues. Lys309 bears the 5-hydroxylysine mark. Pro314, Pro323, Pro329, Pro335, Pro344, Pro347, Pro356, Pro365, Pro371, Pro383, Pro392, Pro401, Pro404, Pro422, Pro439, Pro445, Pro451, Pro458, Pro464, Pro476, Pro485, Pro497, Pro503, Pro509, and Pro518 each carry 4-hydroxyproline. Over residues 338–364 (KGLTGSPGSPGPDGKTGPPGPAGQDGR) the composition is skewed to low complexity. Residues 373-392 (ARGQAGVMGFPGPKGAAGEP) show a composition bias toward low complexity. Lys530 is modified (5-hydroxylysine). Pro536, Pro551, and Pro557 each carry 4-hydroxyproline. A compositionally biased stretch (low complexity) spans 563–577 (SGPSGPAGPTGARGA). A Phosphoserine modification is found at Ser566. 8 positions are modified to 4-hydroxyproline: Pro578, Pro584, Pro587, Pro596, Pro602, Pro620, Pro629, and Pro638. The segment covering 590 to 617 (AGFAGPPGADGQPGAKGEPGDAGAKGDA) has biased composition (low complexity). A compositionally biased stretch (pro residues) spans 619 to 631 (PPGPAGPTGPPGP). The residue at position 641 (Lys641) is a 5-hydroxylysine. A compositionally biased stretch (low complexity) spans 646–662 (SAGPPGATGFPGAAGRV). 4-hydroxyproline is present on residues Pro650 and Pro656. Pro664 carries the post-translational modification 3-hydroxyproline. 4-hydroxyproline occurs at positions 665, 674, 677, 693, 703, 712, 730, 739, 742, 748, 763, 769, 775, 784, and 790. The segment covering 762-772 (PPGPMGPPGLA) has biased composition (pro residues). Position 799 is a 5-hydroxylysine (Lys799). Residues 807–822 (PGPPGAPGAPGAPGPV) show a composition bias toward pro residues. Pro810, Pro813, and Pro816 each carry 4-hydroxyproline. The segment covering 843-867 (AGPAGARGPAGPQGPRRGFSGLQGP) has biased composition (low complexity). 4 positions are modified to 4-hydroxyproline: Pro871, Pro874, Pro892, and Pro907. Positions 874-907 (PGEQGPSGASGPAGPRGPPGSAGSPGKDGLNGLP) are enriched in low complexity. The residue at position 912 (Pro912) is a 3-hydroxyproline. A 4-hydroxyproline modification is found at Pro913. The span at 923–938 (VGPPGPPGPPGPPGPP) shows a compositional bias: pro residues. Pro925 is subject to 3-hydroxyproline. The residue at position 926 (Pro926) is a 4-hydroxyproline. Residue Pro928 is modified to 3-hydroxyproline. 4-hydroxyproline is present on Pro929. Pro931 bears the 3-hydroxyproline mark. Pro932, Pro935, and Pro938 each carry 4-hydroxyproline.

It belongs to the fibrillar collagen family. Trimers of one alpha 2(I) and two alpha 1(I) chains. In terms of processing, contains mostly 4-hydroxyproline. Proline residues at the third position of the tripeptide repeating unit (G-X-Y) are hydroxylated in some or all of the chains. Contains 3-hydroxyproline at a few sites. This modification occurs on the first proline residue in the sequence motif Gly-Pro-Hyp, where Hyp is 4-hydroxyproline. Post-translationally, lysine residues at the third position of the tripeptide repeating unit (G-X-Y) are 5-hydroxylated in some or all of the chains. In terms of processing, O-glycosylated on hydroxylated lysine residues. The O-linked glycan consists of a Glc-Gal disaccharide. As to expression, expressed in bones.

The protein resides in the secreted. The protein localises to the extracellular space. It is found in the extracellular matrix. In terms of biological role, type I collagen is a member of group I collagen (fibrillar forming collagen). The sequence is that of Collagen alpha-1(I) chain from Megalonyx jeffersonii (Jefferson's ground sloth).